Here is a 1278-residue protein sequence, read N- to C-terminus: Dynactin subunit 1 (1278 aa).

The tract at residues 1–25 is disordered; that stretch reads MAQSKRHVYSRTPSGSRMSAEASAR. The region spanning 48 to 90 is the CAP-Gly domain; it reads GATLFATGKWVGVILDEAKGKNDGTVQGRKYFTCDEGHGIFVR. The interval 100 to 223 is disordered; it reads GADTTSPETP…SKEEEGLRAQ (124 aa). The segment covering 102–114 has biased composition (polar residues); it reads DTTSPETPDSSAS. A Phosphothreonine modification is found at Thr-108. A compositionally biased stretch (basic residues) spans 129–152; the sequence is SKLRGLKPKKAPTARKTTTRRPKP. Residues Thr-145, Thr-146, and Thr-147 each carry the phosphothreonine; by SLK modification. The segment covering 161-184 has biased composition (low complexity); that stretch reads AGASSSLGPSGSASAGELSSSEPS. The residue at position 179 (Ser-179) is a Phosphoserine; by PLK1. Ser-212 bears the Phosphoserine; by CDK1 mark. Coiled coils occupy residues 213–547, 943–1049, and 1182–1211; these read PSKE…RQQQ, LKLE…EGLR, and SAQL…KETV. The segment covering 214 to 223 has biased composition (basic and acidic residues); that stretch reads SKEEEGLRAQ. Positions 911 to 1278 are interaction with HPS6; that stretch reads EYDAERPPSK…LHQLHSRLIS (368 aa).

It belongs to the dynactin 150 kDa subunit family. In terms of assembly, monomer and homodimer. Subunit of dynactin, a multiprotein complex part of a tripartite complex with dynein and a adapter, such as BICDL1, BICD2 or HOOK3. The dynactin complex is built around ACTR1A/ACTB filament and consists of an actin-related filament composed of a shoulder domain, a pointed end and a barbed end. Its length is defined by its flexible shoulder domain. The soulder is composed of 2 DCTN1 subunits, 4 DCTN2 and 2 DCTN3. DCTN1/p150(glued) binds directly to microtubules and to cytoplasmic dynein. The 4 DCNT2 (via N-terminus) bind the ACTR1A filament and act as molecular rulers to determine the length. The pointed end is important for binding dynein-dynactin cargo adapters. Consists of 4 subunits: ACTR10, DCNT4, DCTN5 and DCTN6. The barbed end is composed of a CAPZA1:CAPZB heterodimers, which binds ACTR1A/ACTB filament and dynactin and stabilizes dynactin. Interacts with the C-terminus of MAPRE1, MAPRE2 and MAPRE3. Interacts (via C-terminus) with SNX6. Interacts with CLN3, DYNAP, ECPAS and FBXL5. Interacts with MISP; this interaction regulates its distribution at the cell cortex. Interacts with CEP131. Interacts with CEP126. Interacts with CLIP1. Interacts with dynein intermediate chain and dynein heavy chain. Interacts with PLK1 (via POLO-box domain). Interacts with TBCB. Binds preferentially to tyrosinated microtubules than to detyrosinated microtubules. Interacts with PARD6A. Interacts with HPS6. Interacts with KIF3A. Interacts with BICD2. Interacts with DST (isoform 9). Interacts with DST (isoform 1). Identified in a complex with MREG and RILP. Interacts with BCCIP (isoform 2/alpha). Interacts with DCDC1. Interacts with AKNA. Interacts with DYNC1I2. Interacts with RUFY3 and RUFY4. Post-translationally, ubiquitinated by a SCF complex containing FBXL5, leading to its degradation by the proteasome. In terms of processing, phosphorylation by SLK at Thr-145, Thr-146 and Thr-147 targets DCTN1 to the centrosome. It is uncertain if SLK phosphorylates all three threonines or one or two of them. PLK1-mediated phosphorylation at Ser-179 is essential for its localization in the nuclear envelope, promotes its dissociation from microtubules during early mitosis and positively regulates nuclear envelope breakdown during prophase. In terms of tissue distribution, brain.

The protein localises to the cytoplasm. Its subcellular location is the cytoskeleton. It localises to the microtubule organizing center. The protein resides in the centrosome. It is found in the centriole. The protein localises to the spindle. Its subcellular location is the nucleus envelope. It localises to the cell cortex. Functionally, part of the dynactin complex that activates the molecular motor dynein for ultra-processive transport along microtubules. Plays a key role in dynein-mediated retrograde transport of vesicles and organelles along microtubules by recruiting and tethering dynein to microtubules. Binds to both dynein and microtubules providing a link between specific cargos, microtubules and dynein. Essential for targeting dynein to microtubule plus ends, recruiting dynein to membranous cargos and enhancing dynein processivity (the ability to move along a microtubule for a long distance without falling off the track). Can also act as a brake to slow the dynein motor during motility along the microtubule. Can regulate microtubule stability by promoting microtubule formation, nucleation and polymerization and by inhibiting microtubule catastrophe in neurons. Inhibits microtubule catastrophe by binding both to microtubules and to tubulin, leading to enhanced microtubule stability along the axon. Plays a role in metaphase spindle orientation. Plays a role in centriole cohesion and subdistal appendage organization and function. Its recruitment to the centriole in a KIF3A-dependent manner is essential for the maintenance of centriole cohesion and the formation of subdistal appendage. Also required for microtubule anchoring at the mother centriole. Plays a role in primary cilia formation. This is Dynactin subunit 1 from Homo sapiens (Human).